The following is a 140-amino-acid chain: UPF0102 protein ACIAD1132 (140 aa).

The protein belongs to the UPF0102 family.

This is UPF0102 protein ACIAD1132 from Acinetobacter baylyi (strain ATCC 33305 / BD413 / ADP1).